The sequence spans 112 residues: UPF0122 protein CPE1714 (112 aa).

It belongs to the UPF0122 family.

Functionally, might take part in the signal recognition particle (SRP) pathway. This is inferred from the conservation of its genetic proximity to ftsY/ffh. May be a regulatory protein. The polypeptide is UPF0122 protein CPE1714 (Clostridium perfringens (strain 13 / Type A)).